An 88-amino-acid polypeptide reads, in one-letter code: UPF0367 protein Synpcc7942_1638 (88 aa).

The protein belongs to the UPF0367 family.

The protein is UPF0367 protein Synpcc7942_1638 of Synechococcus elongatus (strain ATCC 33912 / PCC 7942 / FACHB-805) (Anacystis nidulans R2).